The sequence spans 308 residues: Acetylglutamate kinase (308 aa).

Substrate is bound by residues 64–65, arginine 86, and asparagine 192; that span reads GG.

This sequence belongs to the acetylglutamate kinase family. ArgB subfamily.

Its subcellular location is the cytoplasm. It carries out the reaction N-acetyl-L-glutamate + ATP = N-acetyl-L-glutamyl 5-phosphate + ADP. It participates in amino-acid biosynthesis; L-arginine biosynthesis; N(2)-acetyl-L-ornithine from L-glutamate: step 2/4. Its function is as follows. Catalyzes the ATP-dependent phosphorylation of N-acetyl-L-glutamate. This chain is Acetylglutamate kinase, found in Myxococcus xanthus (strain DK1622).